We begin with the raw amino-acid sequence, 966 residues long: Probable LIM domain-containing serine/threonine-protein kinase DDB_G0286997 (966 aa).

LIM zinc-binding domains lie at 3–62 (SRCG…LNAP) and 63–120 (KCFK…KPPP). Disordered regions lie at residues 208–291 (YSLS…PTED) and 331–588 (PLNQ…EQQV). Low complexity predominate over residues 211-231 (SSPSSSSSSSSSSSSSSSSPP). The segment covering 232 to 269 (NTFNKSSDFLRNPLNNNVKSSSSSIGGNFVNKSQQQQQ) has biased composition (polar residues). Composition is skewed to low complexity over residues 270 to 284 (PIDSCSKSSISISPS) and 331 to 350 (PLNQQPQQQQQQFKPQSPNL). The segment covering 374–389 (TTTFSNPLLKTKNQSF) has biased composition (polar residues). A compositionally biased stretch (pro residues) spans 419-430 (PLPPPPITPIPS). Low complexity predominate over residues 431–449 (PSSSSIIINNQQQQQQESQ). Positions 490–511 (KPIVLPPPPLDMEQLPLPPPPL) are enriched in pro residues. Residues 513–526 (SSQINQSLKSTQHN) show a composition bias toward polar residues. Positions 543–560 (IQKQSIPTRKPQLPQSSN) are enriched in low complexity. The segment covering 561–570 (PSPPSPPSPQ) has biased composition (pro residues). The region spanning 702 to 959 (VIFGDVIAAG…DTLKKISESL (258 aa)) is the Protein kinase domain. ATP contacts are provided by residues 708 to 716 (IAAGASGKV) and Lys729. Catalysis depends on Asp825, which acts as the Proton acceptor.

It belongs to the protein kinase superfamily. TKL Ser/Thr protein kinase family.

It catalyses the reaction L-seryl-[protein] + ATP = O-phospho-L-seryl-[protein] + ADP + H(+). The enzyme catalyses L-threonyl-[protein] + ATP = O-phospho-L-threonyl-[protein] + ADP + H(+). This is Probable LIM domain-containing serine/threonine-protein kinase DDB_G0286997 from Dictyostelium discoideum (Social amoeba).